Consider the following 431-residue polypeptide: Protein translocase subunit SecY 1 (431 aa).

A run of 10 helical transmembrane segments spans residues isoleucine 18–glycine 38, tyrosine 67–leucine 87, tyrosine 115–leucine 135, valine 150–isoleucine 170, glycine 178–isoleucine 198, isoleucine 215–valine 235, valine 268–phenylalanine 288, glycine 312–valine 332, leucine 365–leucine 385, and leucine 392–glutamate 412.

Belongs to the SecY/SEC61-alpha family. Component of the Sec protein translocase complex. Heterotrimer consisting of SecY, SecE and SecG subunits. The heterotrimers can form oligomers, although 1 heterotrimer is thought to be able to translocate proteins. Interacts with the ribosome. Interacts with SecDF, and other proteins may be involved. Interacts with SecA.

Its subcellular location is the cell membrane. In terms of biological role, the central subunit of the protein translocation channel SecYEG. Consists of two halves formed by TMs 1-5 and 6-10. These two domains form a lateral gate at the front which open onto the bilayer between TMs 2 and 7, and are clamped together by SecE at the back. The channel is closed by both a pore ring composed of hydrophobic SecY resides and a short helix (helix 2A) on the extracellular side of the membrane which forms a plug. The plug probably moves laterally to allow the channel to open. The ring and the pore may move independently. The sequence is that of Protein translocase subunit SecY 1 from Lactobacillus kefiranofaciens subsp. kefiranofaciens.